The primary structure comprises 50 residues: Protein HokA (50 aa).

The chain crosses the membrane as a helical span at residues 7-24 (LLSLIVICFTLLFFTWMI).

Belongs to the Hok/Gef family.

Its subcellular location is the cell inner membrane. In terms of biological role, toxic component of a type I toxin-antitoxin (TA) system. When overexpressed kills cells within minutes; causes collapse of the transmembrane potential and arrest of respiration. Its toxic effect is probably neutralized by antisense antitoxin RNA SokA. The protein is Protein HokA of Escherichia coli (strain K12).